Reading from the N-terminus, the 139-residue chain is Large ribosomal subunit protein uL16 (139 aa).

Residues 1–19 (MLIPRRVKHRKQHHPKRSG) show a composition bias toward basic residues. The interval 1-25 (MLIPRRVKHRKQHHPKRSGMSKGGT) is disordered.

Belongs to the universal ribosomal protein uL16 family. Part of the 50S ribosomal subunit.

Its function is as follows. Binds 23S rRNA and is also seen to make contacts with the A and possibly P site tRNAs. The sequence is that of Large ribosomal subunit protein uL16 from Streptomyces griseus subsp. griseus (strain JCM 4626 / CBS 651.72 / NBRC 13350 / KCC S-0626 / ISP 5235).